Reading from the N-terminus, the 333-residue chain is tRNA dimethylallyltransferase (333 aa).

Position 16-23 (16-23) interacts with ATP; that stretch reads GPTASGKT. Residue 18–23 coordinates substrate; it reads TASGKT. Interaction with substrate tRNA regions lie at residues 41–44, 165–169, and 253–258; these read DSAL, QRISR, and RCVGYR.

It belongs to the IPP transferase family. In terms of assembly, monomer. It depends on Mg(2+) as a cofactor.

The catalysed reaction is adenosine(37) in tRNA + dimethylallyl diphosphate = N(6)-dimethylallyladenosine(37) in tRNA + diphosphate. In terms of biological role, catalyzes the transfer of a dimethylallyl group onto the adenine at position 37 in tRNAs that read codons beginning with uridine, leading to the formation of N6-(dimethylallyl)adenosine (i(6)A). This chain is tRNA dimethylallyltransferase, found in Polaromonas sp. (strain JS666 / ATCC BAA-500).